Consider the following 210-residue polypeptide: Inner membrane-spanning protein YciB (210 aa).

6 consecutive transmembrane segments (helical) span residues 12–32, 53–73, 78–98, 115–135, 153–173, and 175–195; these read EVSP…FFFA, IFIA…VSWM, LPMM…LTLW, LFGA…GYVF, WGVF…SFST, and FWVA…TLAQ.

This sequence belongs to the YciB family.

The protein localises to the cell inner membrane. Plays a role in cell envelope biogenesis, maintenance of cell envelope integrity and membrane homeostasis. This chain is Inner membrane-spanning protein YciB, found in Sinorhizobium medicae (strain WSM419) (Ensifer medicae).